Here is a 418-residue protein sequence, read N- to C-terminus: Argininosuccinate synthase (418 aa).

Residue 16–24 (AYSGGLDTS) participates in ATP binding. Y95 is a binding site for L-citrulline. Position 125 (G125) interacts with ATP. L-aspartate-binding residues include T127, N131, and D132. L-citrulline is bound at residue N131. R135, S183, E267, and Y279 together coordinate L-citrulline.

Belongs to the argininosuccinate synthase family. Type 1 subfamily. As to quaternary structure, homotetramer.

The protein resides in the cytoplasm. It carries out the reaction L-citrulline + L-aspartate + ATP = 2-(N(omega)-L-arginino)succinate + AMP + diphosphate + H(+). The protein operates within amino-acid biosynthesis; L-arginine biosynthesis; L-arginine from L-ornithine and carbamoyl phosphate: step 2/3. In Bifidobacterium adolescentis (strain ATCC 15703 / DSM 20083 / NCTC 11814 / E194a), this protein is Argininosuccinate synthase.